Reading from the N-terminus, the 103-residue chain is Omega toxin Ap5 (103 aa).

The N-terminal stretch at Met-1–Ala-22 is a signal peptide. Positions Asp-23–Arg-57 are excised as a propeptide. 3 disulfides stabilise this stretch: Cys-58/Cys-73, Cys-65/Cys-78, and Cys-72/Cys-93.

The protein belongs to the neurotoxin 14 (magi-1) family. 08 (Ltx-4) subfamily. As to expression, expressed by the venom duct.

It localises to the secreted. Shows a weak inhibition on the voltage-gated calcium channel Cav2.1/CACNA1A and some voltage-gated sodium channels (with 1 uM toxin tested: 22.08% inhibition on Cav2.1/CACNA1A, 6.6% on Nav1.1/SCN1A, 4.2% on Nav1.5, and 16% on Nav1.7). Functionally, shows a weak inhibition on the voltage-gated calcium channel Cav2.1/CACNA1A (28.06% at 1 uM). The chain is Omega toxin Ap5 from Acanthoscurria paulensis (Brazilian giant black tarantula spider).